Here is a 248-residue protein sequence, read N- to C-terminus: Type III pantothenate kinase (248 aa).

Residue 6–13 (ELGNSQLK) coordinates ATP. Substrate-binding positions include Tyr-94 and 101–104 (GVDR). Asp-103 (proton acceptor) is an active-site residue. A K(+)-binding site is contributed by Asp-123. Residue Thr-126 participates in ATP binding. Thr-179 contacts substrate.

This sequence belongs to the type III pantothenate kinase family. Homodimer. NH4(+) serves as cofactor. K(+) is required as a cofactor.

The protein localises to the cytoplasm. The enzyme catalyses (R)-pantothenate + ATP = (R)-4'-phosphopantothenate + ADP + H(+). It participates in cofactor biosynthesis; coenzyme A biosynthesis; CoA from (R)-pantothenate: step 1/5. Its function is as follows. Catalyzes the phosphorylation of pantothenate (Pan), the first step in CoA biosynthesis. The polypeptide is Type III pantothenate kinase (Hydrogenovibrio crunogenus (strain DSM 25203 / XCL-2) (Thiomicrospira crunogena)).